A 29-amino-acid chain; its full sequence is Augerpeptide hheTx2 (29 aa).

Contains 4 disulfide bonds. Expressed by the venom duct.

The protein localises to the secreted. The polypeptide is Augerpeptide hheTx2 (Hastula hectica (Sea snail)).